Reading from the N-terminus, the 323-residue chain is MKKIAVIGCGFVGSTYILDLLQQGVQADYLLVDKNTNLADGHVRDLRDSKSLKSHNGSTFNVGTYDDLKDADVVAITASIPTVPTADGEVFTDRLQLMTANVKILNEIALELKRVGFKGLSIIPTNPCDVMAGVYQKVTGFDPHKIISTGCQLETMRTRKMISEALGVNSDSVEGFVVGEHGSGAIVPWSVFRVGNVPMKQLIAEGKIKEEYVKDIFSRVVKEAFEIIKFKKATYFGIAESMSLITRAYIYNLNTVLGVGVQLDDKYVASGIYFTVPAVVGKHGWKLHSKLQLSQEEQAAFDKSALNIQKVTKDALDLIGFKN.

Positions 12, 33, and 65 each coordinate NAD(+). Substrate contacts are provided by residues R94 and 126 to 129 (NPCD). T149 is an NAD(+) binding site. A substrate-binding site is contributed by 154–157 (ETMR). H181 acts as the Proton acceptor in catalysis. T234 provides a ligand contact to substrate.

This sequence belongs to the LDH/MDH superfamily. LDH family. In terms of assembly, homotetramer.

The protein resides in the cytoplasm. It carries out the reaction (S)-lactate + NAD(+) = pyruvate + NADH + H(+). It functions in the pathway fermentation; pyruvate fermentation to lactate; (S)-lactate from pyruvate: step 1/1. Catalyzes the conversion of lactate to pyruvate. This is L-lactate dehydrogenase from Mycoplasmoides gallisepticum (strain R(low / passage 15 / clone 2)) (Mycoplasma gallisepticum).